Reading from the N-terminus, the 205-residue chain is Guanylyl cyclase-activating protein 1 (205 aa).

Gly-2 is lipidated: N-myristoyl glycine. Asn-3 is subject to Deamidated asparagine. EF-hand domains lie at 30 to 48, 50 to 85, 86 to 121, and 129 to 164; these read SGQL…KNLS, ASNQ…VLKG, KVEQ…IRAI, and TAEE…DELL. 15 residues coordinate Ca(2+): Asp-63, Asn-65, Asp-67, Tyr-69, Glu-74, Asp-99, Asp-101, Asn-103, Cys-105, Glu-110, Asp-142, Asn-144, Asp-146, Glu-148, and Glu-153.

As to expression, retina.

Functionally, regulatory protein that inhibits guanylyl cyclase when free calcium ions concentration is elevated. This Ca(2+)-sensitive regulation of retinal guanylyl cyclase is a key event in recovery of the dark state of rod photoreceptors following light exposure. This Lithobates pipiens (Northern leopard frog) protein is Guanylyl cyclase-activating protein 1 (GUCA1A).